We begin with the raw amino-acid sequence, 219 residues long: Thiamine-phosphate synthase (219 aa).

Residues 44 to 48 and Asn-79 each bind 4-amino-2-methyl-5-(diphosphooxymethyl)pyrimidine; that span reads QFREK. Asp-80 and Asp-99 together coordinate Mg(2+). Ser-117 contacts 4-amino-2-methyl-5-(diphosphooxymethyl)pyrimidine. 143 to 145 is a binding site for 2-[(2R,5Z)-2-carboxy-4-methylthiazol-5(2H)-ylidene]ethyl phosphate; it reads TST. Lys-146 contributes to the 4-amino-2-methyl-5-(diphosphooxymethyl)pyrimidine binding site. 2-[(2R,5Z)-2-carboxy-4-methylthiazol-5(2H)-ylidene]ethyl phosphate is bound by residues Gly-175 and 195 to 196; that span reads IS.

It belongs to the thiamine-phosphate synthase family. Requires Mg(2+) as cofactor.

The catalysed reaction is 2-[(2R,5Z)-2-carboxy-4-methylthiazol-5(2H)-ylidene]ethyl phosphate + 4-amino-2-methyl-5-(diphosphooxymethyl)pyrimidine + 2 H(+) = thiamine phosphate + CO2 + diphosphate. It carries out the reaction 2-(2-carboxy-4-methylthiazol-5-yl)ethyl phosphate + 4-amino-2-methyl-5-(diphosphooxymethyl)pyrimidine + 2 H(+) = thiamine phosphate + CO2 + diphosphate. It catalyses the reaction 4-methyl-5-(2-phosphooxyethyl)-thiazole + 4-amino-2-methyl-5-(diphosphooxymethyl)pyrimidine + H(+) = thiamine phosphate + diphosphate. Its pathway is cofactor biosynthesis; thiamine diphosphate biosynthesis; thiamine phosphate from 4-amino-2-methyl-5-diphosphomethylpyrimidine and 4-methyl-5-(2-phosphoethyl)-thiazole: step 1/1. Functionally, condenses 4-methyl-5-(beta-hydroxyethyl)thiazole monophosphate (THZ-P) and 2-methyl-4-amino-5-hydroxymethyl pyrimidine pyrophosphate (HMP-PP) to form thiamine monophosphate (TMP). This chain is Thiamine-phosphate synthase, found in Bacillus cereus (strain AH187).